Consider the following 229-residue polypeptide: UPF0173 metal-dependent hydrolase SH1218 (229 aa).

The protein belongs to the UPF0173 family.

The protein is UPF0173 metal-dependent hydrolase SH1218 of Staphylococcus haemolyticus (strain JCSC1435).